The sequence spans 517 residues: Putative succinate-semialdehyde dehydrogenase [NADP(+)] (517 aa).

NADP(+)-binding positions include 157-158, 181-184, and 232-233; these read WN, KPDS, and GS. The active-site Proton acceptor is E254. L255 is a binding site for NADP(+). C288 functions as the Nucleophile in the catalytic mechanism. E386 lines the NADP(+) pocket.

Belongs to the aldehyde dehydrogenase family.

It catalyses the reaction succinate semialdehyde + NADP(+) + H2O = succinate + NADPH + 2 H(+). Catalyzes the NADP(+)-dependent oxidation of succinate semialdehyde to succinate. Although it has succinate semialdehyde dehydrogenase activity, is likely to act physiologically on a different aldehyde(s). The chain is Putative succinate-semialdehyde dehydrogenase [NADP(+)] (gabD2) from Mycolicibacterium smegmatis (strain ATCC 700084 / mc(2)155) (Mycobacterium smegmatis).